A 602-amino-acid polypeptide reads, in one-letter code: Rho family-interacting cell polarization regulator 2 (602 aa).

A disordered region spans residues K46–R73. Basic residues predominate over residues P48 to G59. Residues N83 to L112 are a coiled coil. Positions R173 to L421 are necessary for interaction with NCAM and myoblast protrusion formation. Residues G384 to N474 form a disordered region. The span at A403 to T416 shows a compositional bias: polar residues. Positions S423 to C437 are enriched in low complexity.

The protein belongs to the RIPOR family. Homooligomer; homooligomerization is regulated by RHOC and leads to the formation of concatemers through the association of N- and C-termini. Interacts with NCAM.

It is found in the cytoplasm. The protein localises to the cytoskeleton. Its subcellular location is the cell projection. It localises to the filopodium. The protein resides in the apical cell membrane. It is found in the stereocilium. The protein localises to the stereocilium membrane. Functionally, acts as an inhibitor of the small GTPase RHOA and plays several roles in the regulation of myoblast and hair cell differentiation, lymphocyte T proliferation and neutrophil polarization. Plays a role in fetal mononuclear myoblast differentiation by promoting filopodia and myotube formation. Maintains naive T lymphocytes in a quiescent state and prevents chemokine-induced T lymphocyte responses, such as cell adhesion, polarization and migration. Involved also in the regulation of neutrophil polarization, chemotaxis and adhesion. Required for normal development of inner and outer hair cell stereocilia within the cochlea of the inner ear. Plays a role for maintaining the structural organization of the basal domain of stereocilia. Involved in mechanosensory hair cell function. Required for normal hearing. The sequence is that of Rho family-interacting cell polarization regulator 2 from Gallus gallus (Chicken).